The chain runs to 1284 residues: Kinesin-like protein KIN-4C (1284 aa).

The 353-residue stretch at 12 to 364 folds into the Kinesin motor domain; it reads SVKVVVNIRP…LKYANRARNI (353 aa). 91-98 contributes to the ATP binding site; that stretch reads GQTGSGKT. Coiled-coil stretches lie at residues 407–445, 561–711, and 911–950; these read SAAL…EQLA, RDHS…QFRS, and MCKE…NMLL. 2 disordered regions span residues 1040-1070 and 1158-1284; these read RRQT…SQEK and MSEK…NHLR. The segment covering 1043 to 1070 has biased composition (polar residues); the sequence is TVSSHLNPNPGSGTTQKSAKSEMASQEK. Basic and acidic residues-rich tracts occupy residues 1158–1172 and 1275–1284; these read MSEK…RKPL and NANEKENHLR.

Belongs to the TRAFAC class myosin-kinesin ATPase superfamily. Kinesin family. KIN-4 subfamily. As to quaternary structure, homodimer.

Microtubule-dependent motor protein involved in the control of the oriented deposition of cellulose microfibrils. This Oryza sativa subsp. japonica (Rice) protein is Kinesin-like protein KIN-4C.